We begin with the raw amino-acid sequence, 444 residues long: 3-isopropylmalate dehydratase large subunit (444 aa).

[4Fe-4S] cluster contacts are provided by X348, C408, and X411. The interval 423–444 is disordered; sequence ERXXSHSNRNFEGRQGRGGRTH.

This sequence belongs to the aconitase/IPM isomerase family. LeuC type 1 subfamily. As to quaternary structure, heterodimer of LeuC and LeuD. Requires [4Fe-4S] cluster as cofactor.

The enzyme catalyses (2R,3S)-3-isopropylmalate = (2S)-2-isopropylmalate. The protein operates within amino-acid biosynthesis; L-leucine biosynthesis; L-leucine from 3-methyl-2-oxobutanoate: step 2/4. Functionally, catalyzes the isomerization between 2-isopropylmalate and 3-isopropylmalate, via the formation of 2-isopropylmaleate. The protein is 3-isopropylmalate dehydratase large subunit of Buchnera aphidicola subsp. Uroleucon rudbeckiae.